The chain runs to 415 residues: Citrate (Re)-synthase (415 aa).

In terms of domain architecture, Pyruvate carboxyltransferase spans 4 to 275; the sequence is IFIIDVTNRD…GHEVDLSKAW (272 aa).

The protein belongs to the alpha-IPM synthase/homocitrate synthase family. Requires Mn(2+) as cofactor.

It catalyses the reaction oxaloacetate + acetyl-CoA + H2O = citrate + CoA + H(+). Inhibited by citrate and under aerobic conditions. In terms of biological role, catalyzes the condensation of the acetyl group of acetyl coenzyme A (acetyl-CoA) with oxaloacetate to form citrate. This enzyme is highly Re-face stereospecific with respect to the C-2 of oxaloacetate. The chain is Citrate (Re)-synthase from Dehalococcoides mccartyi (strain CBDB1).